A 438-amino-acid chain; its full sequence is Asparagine--tRNA ligase (438 aa).

It belongs to the class-II aminoacyl-tRNA synthetase family. Homodimer.

Its subcellular location is the cytoplasm. The enzyme catalyses tRNA(Asn) + L-asparagine + ATP = L-asparaginyl-tRNA(Asn) + AMP + diphosphate + H(+). The chain is Asparagine--tRNA ligase from Thermus thermophilus (strain ATCC 27634 / DSM 579 / HB8).